The following is a 203-amino-acid chain: Pyridoxal 5'-phosphate synthase subunit PdxT (203 aa).

49-51 (GES) lines the L-glutamine pocket. Catalysis depends on C81, which acts as the Nucleophile. L-glutamine contacts are provided by residues R110 and 139 to 140 (IR). Residues H175 and E177 each act as charge relay system in the active site.

It belongs to the glutaminase PdxT/SNO family. In terms of assembly, in the presence of PdxS, forms a dodecamer of heterodimers. Only shows activity in the heterodimer.

It carries out the reaction aldehydo-D-ribose 5-phosphate + D-glyceraldehyde 3-phosphate + L-glutamine = pyridoxal 5'-phosphate + L-glutamate + phosphate + 3 H2O + H(+). The enzyme catalyses L-glutamine + H2O = L-glutamate + NH4(+). The protein operates within cofactor biosynthesis; pyridoxal 5'-phosphate biosynthesis. In terms of biological role, catalyzes the hydrolysis of glutamine to glutamate and ammonia as part of the biosynthesis of pyridoxal 5'-phosphate. The resulting ammonia molecule is channeled to the active site of PdxS. The protein is Pyridoxal 5'-phosphate synthase subunit PdxT of Parafrankia sp. (strain EAN1pec).